Reading from the N-terminus, the 150-residue chain is Small ribosomal subunit protein eS19 (150 aa).

This sequence belongs to the eukaryotic ribosomal protein eS19 family. In terms of assembly, part of the 30S ribosomal subunit.

May be involved in maturation of the 30S ribosomal subunit. This is Small ribosomal subunit protein eS19 from Thermoplasma volcanium (strain ATCC 51530 / DSM 4299 / JCM 9571 / NBRC 15438 / GSS1).